Here is a 271-residue protein sequence, read N- to C-terminus: Zinc finger CCHC domain-containing protein 9 (271 aa).

The segment at 1–67 (MTRWARVTTS…RKKNKKKKEY (67 aa)) is disordered. The span at 7–20 (VTTSNSKRPLSATS) shows a compositional bias: polar residues. Basic and acidic residues predominate over residues 22 to 33 (EDMKKGSVERAD). A compositionally biased stretch (polar residues) spans 35-46 (SLPNRKQCQSSR). Positions 56–65 (AKRKKNKKKK) are enriched in basic residues. 4 consecutive CCHC-type zinc fingers follow at residues 128–145 (MVCF…DCPA), 155–172 (GICY…KCRA), 184–201 (AKCF…SCPD), and 211–228 (GSCK…DCRE).

As to expression, detected in brain cortex and in testis.

The protein localises to the nucleus. The protein resides in the nucleolus. May down-regulate transcription mediated by NF-kappa-B and the serum response element. The protein is Zinc finger CCHC domain-containing protein 9 (Zcchc9) of Mus musculus (Mouse).